A 506-amino-acid polypeptide reads, in one-letter code: Cobyric acid synthase (506 aa).

Residues 260–453 form the GATase cobBQ-type domain; it reads KVGVAAIYFP…FHGIFNEPAV (194 aa). The Nucleophile role is filled by Cys341. The active site involves His445.

This sequence belongs to the CobB/CobQ family. CobQ subfamily.

Its pathway is cofactor biosynthesis; adenosylcobalamin biosynthesis. Its function is as follows. Catalyzes amidations at positions B, D, E, and G on adenosylcobyrinic A,C-diamide. NH(2) groups are provided by glutamine, and one molecule of ATP is hydrogenolyzed for each amidation. This chain is Cobyric acid synthase, found in Chlorobium chlorochromatii (strain CaD3).